We begin with the raw amino-acid sequence, 217 residues long: Small ribosomal subunit protein uS3 (217 aa).

The KH type-2 domain occupies Ile-38 to Lys-106.

It belongs to the universal ribosomal protein uS3 family. Part of the 30S ribosomal subunit. Forms a tight complex with proteins S10 and S14.

In terms of biological role, binds the lower part of the 30S subunit head. Binds mRNA in the 70S ribosome, positioning it for translation. The protein is Small ribosomal subunit protein uS3 of Lactococcus lactis subsp. lactis (strain IL1403) (Streptococcus lactis).